The sequence spans 165 residues: Dihydrofolate reductase type A13 (165 aa).

Residues 7–162 (RIYLVAAMGA…ITYTHSVYAR (156 aa)) enclose the DHFR domain.

Belongs to the dihydrofolate reductase family. As to quaternary structure, homodimer.

The enzyme catalyses (6S)-5,6,7,8-tetrahydrofolate + NADP(+) = 7,8-dihydrofolate + NADPH + H(+). Its pathway is cofactor biosynthesis; tetrahydrofolate biosynthesis; 5,6,7,8-tetrahydrofolate from 7,8-dihydrofolate: step 1/1. Its function is as follows. Key enzyme in folate metabolism. Catalyzes an essential reaction for de novo glycine and purine synthesis, and for DNA precursor synthesis. The polypeptide is Dihydrofolate reductase type A13 (dfrA13) (Escherichia coli).